Here is a 430-residue protein sequence, read N- to C-terminus: 3-phosphoshikimate 1-carboxyvinyltransferase (430 aa).

3-phosphoshikimate contacts are provided by K21, S22, and R26. K21 is a binding site for phosphoenolpyruvate. Positions 94 and 122 each coordinate phosphoenolpyruvate. 3-phosphoshikimate is bound by residues S168, Q170, D315, and K342. Q170 is a phosphoenolpyruvate binding site. The active-site Proton acceptor is the D315. Phosphoenolpyruvate is bound by residues R346 and R389.

This sequence belongs to the EPSP synthase family. In terms of assembly, monomer.

The protein localises to the cytoplasm. It carries out the reaction 3-phosphoshikimate + phosphoenolpyruvate = 5-O-(1-carboxyvinyl)-3-phosphoshikimate + phosphate. It functions in the pathway metabolic intermediate biosynthesis; chorismate biosynthesis; chorismate from D-erythrose 4-phosphate and phosphoenolpyruvate: step 6/7. In terms of biological role, catalyzes the transfer of the enolpyruvyl moiety of phosphoenolpyruvate (PEP) to the 5-hydroxyl of shikimate-3-phosphate (S3P) to produce enolpyruvyl shikimate-3-phosphate and inorganic phosphate. The chain is 3-phosphoshikimate 1-carboxyvinyltransferase from Salinibacter ruber (strain DSM 13855 / M31).